The primary structure comprises 291 residues: uncharacterized protein (291 aa).

Solcar repeat units follow at residues 15 to 93, 104 to 190, and 201 to 287; these read PGPV…IKKS, PRTV…IKQS, and LSTV…VMEI. A run of 6 helical transmembrane segments spans residues 21 to 41, 70 to 90, 108 to 128, 169 to 189, 201 to 221, and 259 to 280; these read IIAG…AEFA, STVI…FDSI, LAGL…FESI, TVAR…SIKQ, LSTV…VYCT, and FWSG…VFTV.

This sequence belongs to the mitochondrial carrier (TC 2.A.29) family.

Its subcellular location is the mitochondrion inner membrane. This is an uncharacterized protein from Schizosaccharomyces pombe (strain 972 / ATCC 24843) (Fission yeast).